The primary structure comprises 334 residues: MKKKQFLKESDVTAESVFFMKRRQVLKALGISAAALSLPHAAHADLLSWFKGNDRPPAPAGKPLEFSKPAAWQNNLPLTPVDKVSGYNNFYEFGLDKADPAANAGSLKTDPWTLKISGEVAKPLTLDHDDLTRRFPLEERIYRMRCVEAWSMVVPWIGFPLHKLLALAEPTSNAKYVAFETIYAPEQMPGQQDRFIGGGLKYPYVEGLRLDEAMHPLTLMTVGVYGKALPPQNGAPVRLIVPWKYGFKGIKSIVSIKLTRERPPTTWNLAAPDEYGFYANVNPHVDHPRWSQATERFIGSGGILDVQRQPTLLFNGYADQVASLYRGLDLRENF.

The tat-type signal signal peptide spans 1 to 44; that stretch reads MKKKQFLKESDVTAESVFFMKRRQVLKALGISAAALSLPHAAHA. Mo-molybdopterin-binding positions include asparagine 88, 91-92, cysteine 146, threonine 181, asparagine 233, arginine 238, and 249-251; these read YE and GIK.

The protein belongs to the MsrP family. In terms of assembly, heterodimer of a catalytic subunit (MsrP) and a heme-binding subunit (MsrQ). Mo-molybdopterin serves as cofactor. In terms of processing, predicted to be exported by the Tat system. The position of the signal peptide cleavage has not been experimentally proven.

It is found in the periplasm. The enzyme catalyses L-methionyl-[protein] + a quinone + H2O = L-methionyl-(S)-S-oxide-[protein] + a quinol. It carries out the reaction L-methionyl-[protein] + a quinone + H2O = L-methionyl-(R)-S-oxide-[protein] + a quinol. In terms of biological role, part of the MsrPQ system that repairs oxidized periplasmic proteins containing methionine sulfoxide residues (Met-O), using respiratory chain electrons. Thus protects these proteins from oxidative-stress damage caused by reactive species of oxygen and chlorine generated by the host defense mechanisms. MsrPQ is essential for the maintenance of envelope integrity under bleach stress, rescuing a wide series of structurally unrelated periplasmic proteins from methionine oxidation, including the primary periplasmic chaperone SurA and the lipoprotein Pal. The catalytic subunit MsrP is non-stereospecific, being able to reduce both (R-) and (S-) diastereoisomers of methionine sulfoxide. In Escherichia coli O139:H28 (strain E24377A / ETEC), this protein is Protein-methionine-sulfoxide reductase catalytic subunit MsrP.